The chain runs to 288 residues: Transmembrane protein 163 (288 aa).

The segment covering M1–S11 has biased composition (basic and acidic residues). The segment at M1 to E64 is disordered. The Cytoplasmic segment spans residues M1–A87. The residue at position 11 (S11) is a Phosphoserine. A compositionally biased stretch (pro residues) spans P12–G24. Low complexity predominate over residues H25–S42. The tract at residues S41 to S71 is required for interaction with MCOLN1. 3 positions are modified to phosphoserine: S54, S56, and S60. A helical transmembrane segment spans residues L88–V108. The Extracellular segment spans residues S109–A115. The helical transmembrane segment at S116–W136 threads the bilayer. Residues R137 to R149 are Cytoplasmic-facing. The helical transmembrane segment at E150–V170 threads the bilayer. Over K171–D186 the chain is Extracellular. Residues F187–F207 form a helical membrane-spanning segment. Over M208–R216 the chain is Cytoplasmic. The helical transmembrane segment at A217–L237 threads the bilayer. Over S238–S254 the chain is Extracellular. Residues I255 to V275 traverse the membrane as a helical segment. Topologically, residues P276–E288 are cytoplasmic.

This sequence belongs to the TMEM163 family. As to quaternary structure, homodimer. Interacts with MCOLN1. Interacts with SLC30A1, SLC30A2, SLC30A3 and SLC30A4. Strongly expressed in brain. Also detected in lung, liver, kidney and spleen. Mainly expressed in the glutaminergic neuron subpopulations.

It is found in the cytoplasmic vesicle. The protein resides in the secretory vesicle. The protein localises to the synaptic vesicle membrane. Its subcellular location is the early endosome membrane. It localises to the late endosome membrane. It is found in the lysosome membrane. The protein resides in the cell membrane. It catalyses the reaction Zn(2+)(in) = Zn(2+)(out). In terms of biological role, zinc ion transporter that mediates zinc efflux and plays a crucial role in intracellular zinc homeostasis. Binds the divalent cations Zn(2+), Ni(2+), and to a minor extent Cu(2+). Is a functional modulator of P2X purinoceptors, including P2RX1, P2RX3, P2RX4 and P2RX7. Plays a role in central nervous system development and is required for myelination, and survival and proliferation of oligodendrocytes. The polypeptide is Transmembrane protein 163 (Tmem163) (Rattus norvegicus (Rat)).